The sequence spans 250 residues: Ribosomal RNA small subunit methyltransferase J (250 aa).

Residues 101–102, 117–118, 153–154, and D171 each bind S-adenosyl-L-methionine; these read RD, ER, and SS.

Belongs to the methyltransferase superfamily. RsmJ family.

The protein localises to the cytoplasm. It carries out the reaction guanosine(1516) in 16S rRNA + S-adenosyl-L-methionine = N(2)-methylguanosine(1516) in 16S rRNA + S-adenosyl-L-homocysteine + H(+). Specifically methylates the guanosine in position 1516 of 16S rRNA. The polypeptide is Ribosomal RNA small subunit methyltransferase J (Shigella boydii serotype 18 (strain CDC 3083-94 / BS512)).